A 512-amino-acid polypeptide reads, in one-letter code: Delta(14)-sterol reductase (512 aa).

A run of 8 helical transmembrane segments spans residues 27–47 (IGAS…GFLC), 100–120 (AVLG…LLPA), 140–160 (ACLS…VRGP), 172–192 (YIQL…YVYL), 242–262 (SFME…AFAA), 278–298 (WTPL…VIIS), 324–344 (FGFM…SIQA), and 353–373 (ALGP…YYIF). Residues Lys-380, Arg-384, Leu-407, Trp-412, and 419–420 (NY) contribute to the NADP(+) site. 2 helical membrane passes run 418–438 (INYL…LAAG) and 458–478 (MKGA…ILLI). Residues Asp-484, 488 to 492 (CRRKY), and Tyr-499 contribute to the NADP(+) site.

The protein belongs to the ERG4/ERG24 family.

It localises to the membrane. The enzyme catalyses 4,4-dimethyl-5alpha-cholesta-8,24-dien-3beta-ol + NADP(+) = 4,4-dimethyl-5alpha-cholesta-8,14,24-trien-3beta-ol + NADPH + H(+). The protein operates within steroid biosynthesis; zymosterol biosynthesis; zymosterol from lanosterol: step 2/6. Functionally, reduces the C14=C15 double bond of 4,4-dimethyl-cholesta-8,14,24-trienol to produce 4,4-dimethyl-cholesta-8,24-dienol. This is Delta(14)-sterol reductase (ERG3) from Septoria lycopersici (Tomato leaf spot fungus).